A 539-amino-acid chain; its full sequence is Netrin-G1 (539 aa).

Positions 1-18 are cleaved as a signal peptide; that stretch reads MYLSRFLSIHALWVTVSS. 3 cysteine pairs are disulfide-bonded: C33–C50, C72–C92, and C80–C88. The 251-residue stretch at 46 to 296 folds into the Laminin N-terminal domain; sequence DYTACQPEST…AISDIKVRGR (251 aa). An NGL discriminant loop I region spans residues 80 to 91; it reads CAMGNPYMCNNE. An N-linked (GlcNAc...) asparagine glycan is attached at N133. C182 and C206 form a disulfide bridge. The NGL discriminant loop II stretch occupies residues 208–214; that stretch reads EEYSTGY. An NGL discriminant loop III region spans residues 273–275; it reads EIF. 13 disulfides stabilise this stretch: C297–C306, C299–C315, C317–C326, C329–C354, C364–C373, C366–C384, C387–C396, C399–C417, C420–C432, C422–C438, C440–C449, C452–C462, and C488–C497. Laminin EGF-like domains follow at residues 297–356, 364–419, and 420–469; these read CKCN…TCIP, CECF…VCIE, and CYCN…VCDN. N320 carries an N-linked (GlcNAc...) asparagine glycan. N406 carries N-linked (GlcNAc...) asparagine glycosylation. A glycan (N-linked (GlcNAc...) asparagine) is linked at N433. Residue S510 is the site of GPI-anchor amidated serine attachment. The propeptide at 511 to 539 is removed in mature form; sequence ESGQGAPPRGSPALLLLTMLLGTAGPLVF.

Post-translationally, N-glycosylated. In terms of tissue distribution, expression is restricted primarily to neurons of the CNS, particularly in the dorsal thalamus, olfactory bulb and inferior colliculus. Isoform 1A and isoform 1D are the major products in adult brain.

The protein localises to the cell membrane. Involved in controlling patterning and neuronal circuit formation at the laminar, cellular, subcellular and synaptic levels. Promotes neurite outgrowth of both axons and dendrites. The chain is Netrin-G1 (Ntng1) from Mus musculus (Mouse).